The sequence spans 81 residues: Photosystem I iron-sulfur center (81 aa).

4Fe-4S ferredoxin-type domains lie at 2–31 (SHSVKIYDTCIGCTQCVRACPTDVLEMIPW) and 39–68 (IASAPRTEDCVGCKRCESACPTDFLSVRVY). Residues Cys-11, Cys-14, Cys-17, Cys-21, Cys-48, Cys-51, Cys-54, and Cys-58 each coordinate [4Fe-4S] cluster.

In terms of assembly, the eukaryotic PSI reaction center is composed of at least 11 subunits. [4Fe-4S] cluster is required as a cofactor.

The protein resides in the plastid. It is found in the chloroplast thylakoid membrane. The catalysed reaction is reduced [plastocyanin] + hnu + oxidized [2Fe-2S]-[ferredoxin] = oxidized [plastocyanin] + reduced [2Fe-2S]-[ferredoxin]. In terms of biological role, apoprotein for the two 4Fe-4S centers FA and FB of photosystem I (PSI); essential for photochemical activity. FB is the terminal electron acceptor of PSI, donating electrons to ferredoxin. The C-terminus interacts with PsaA/B/D and helps assemble the protein into the PSI complex. Required for binding of PsaD and PsaE to PSI. PSI is a plastocyanin-ferredoxin oxidoreductase, converting photonic excitation into a charge separation, which transfers an electron from the donor P700 chlorophyll pair to the spectroscopically characterized acceptors A0, A1, FX, FA and FB in turn. This chain is Photosystem I iron-sulfur center, found in Phalaenopsis aphrodite subsp. formosana (Moth orchid).